The following is a 360-amino-acid chain: Phosphoserine aminotransferase (360 aa).

Arg41 is an L-glutamate binding site. Pyridoxal 5'-phosphate-binding positions include 75–76 (GR), Trp101, Thr152, Asp172, and Gln195. Residue Lys196 is modified to N6-(pyridoxal phosphate)lysine. Pyridoxal 5'-phosphate is bound at residue 237 to 238 (NT).

This sequence belongs to the class-V pyridoxal-phosphate-dependent aminotransferase family. SerC subfamily. Homodimer. Pyridoxal 5'-phosphate serves as cofactor.

The protein resides in the cytoplasm. It carries out the reaction O-phospho-L-serine + 2-oxoglutarate = 3-phosphooxypyruvate + L-glutamate. It catalyses the reaction 4-(phosphooxy)-L-threonine + 2-oxoglutarate = (R)-3-hydroxy-2-oxo-4-phosphooxybutanoate + L-glutamate. Its pathway is amino-acid biosynthesis; L-serine biosynthesis; L-serine from 3-phospho-D-glycerate: step 2/3. It participates in cofactor biosynthesis; pyridoxine 5'-phosphate biosynthesis; pyridoxine 5'-phosphate from D-erythrose 4-phosphate: step 3/5. In terms of biological role, catalyzes the reversible conversion of 3-phosphohydroxypyruvate to phosphoserine and of 3-hydroxy-2-oxo-4-phosphonooxybutanoate to phosphohydroxythreonine. The protein is Phosphoserine aminotransferase of Pseudoalteromonas translucida (strain TAC 125).